The primary structure comprises 993 residues: MGMRPTARMPKLTRRSRILILIALGVIALLLAGPRLIDAYVDWLWFGELGYRSVFSTVLVTRFVVFLIAGLLVGGIVFAGLAVAYRTRPVFVPSNDNDPVARYRALVLSRLRLVSIGVPVAIGLLAGIIAQSYWVRIQLFLHGGDFGIKDPQFGKDLGFYAFELPFYRLLLSYLFVAVFLAFVANLLAHYIFGGIRLSGRTGALSRSARIQLVTLVGLLVLLKAVAYWLDRYELLSHTRGGKPFTGAGYTDINAVLPAKLILMAIALICAAAVFSAITMRDLRIPAIGLVLLLLSSLIVGAGWPLIVEQISVKPNAAQKESEYISRSITATRQAYGLTSDVVTYRNYTGDAQATAQQVADDRATTSNIRLLDPTIVSPAFTQFQQGKNFYYFPDQLSIDRYLDRNGALRDYVVAARELNPDRLIDNQRDWINRHTVYTHGNGFIASPANTVRGIANDPNQNGGYPEFLVNVVGANGNVVSDGPAPLDQPRVYFGPVISNTSADYAIVGRNGADREYDYETSTETKNYTYTGLGGVPIGDWLSRSVFAAKFAERNFLFSNVIGSNSKILFNRDPARRVEAVAPWLTTDSSVYPAIVNKRLVWIIDGYTTLDNYPYSELTSLESATADSNEVAFNKLAPDKRVSYIRNSVKATVDAYDGTVTLYQQDEQDPVLKAWMQVFPGTVKPKSDISPELAEHLRYPEDLFKVQRMLLAKYHVNDPVTFFSTSDFWDVPLDPNPTASSYQPPYYIVAKNIAKNDNSSSYQLTSAMNRFKRDYLAAYISASSDPATYGRITVLTIPGQVNGPKLANNAITTDPAVSQDLGVIGRDNQNRIRWGNLLTLPVGQGGLLYVEPVYASPGASDAASSYPRLIRVAMMYNDKIGYGPTVRDALTGLFGPGAGAAATNIQPTEGGAPAASPPANAPAPAVTPGSAPPVAAPPVPDGSVTLSPAKAAVLQEIQAAIGAAKDAQKKGDFAGYGAALQRLDDAITKYNNTK.

A run of 7 helical transmembrane segments spans residues 18 to 38 (ILILIALGVIALLLAGPRLID), 63 to 83 (FVVFLIAGLLVGGIVFAGLAV), 113 to 133 (LVSIGVPVAIGLLAGIIAQSY), 175 to 195 (FVAVFLAFVANLLAHYIFGGI), 210 to 230 (IQLVTLVGLLVLLKAVAYWLD), 254 to 274 (AVLPAKLILMAIALICAAAVF), and 287 to 307 (IGLVLLLLSSLIVGAGWPLIV). The disordered stretch occupies residues 903–941 (NIQPTEGGAPAASPPANAPAPAVTPGSAPPVAAPPVPDG). Positions 929 to 939 (SAPPVAAPPVP) are enriched in pro residues.

It belongs to the UPF0182 family.

The protein resides in the cell membrane. The sequence is that of UPF0182 protein MAV_4137 from Mycobacterium avium (strain 104).